Here is a 303-residue protein sequence, read N- to C-terminus: tRNA-cytidine(32) 2-sulfurtransferase (303 aa).

The PP-loop motif signature appears at 49–54; it reads SGGKDS. Residues Cys124, Cys127, and Cys215 each coordinate [4Fe-4S] cluster.

Belongs to the TtcA family. As to quaternary structure, homodimer. It depends on Mg(2+) as a cofactor. Requires [4Fe-4S] cluster as cofactor.

It is found in the cytoplasm. It carries out the reaction cytidine(32) in tRNA + S-sulfanyl-L-cysteinyl-[cysteine desulfurase] + AH2 + ATP = 2-thiocytidine(32) in tRNA + L-cysteinyl-[cysteine desulfurase] + A + AMP + diphosphate + H(+). Its pathway is tRNA modification. In terms of biological role, catalyzes the ATP-dependent 2-thiolation of cytidine in position 32 of tRNA, to form 2-thiocytidine (s(2)C32). The sulfur atoms are provided by the cysteine/cysteine desulfurase (IscS) system. This chain is tRNA-cytidine(32) 2-sulfurtransferase, found in Anaeromyxobacter sp. (strain Fw109-5).